The following is a 607-amino-acid chain: Glutamyl-tRNA(Gln) amidotransferase subunit E (607 aa).

The tract at residues G399–E428 is disordered.

Belongs to the GatB/GatE family. GatE subfamily. As to quaternary structure, heterodimer of GatD and GatE.

The enzyme catalyses L-glutamyl-tRNA(Gln) + L-glutamine + ATP + H2O = L-glutaminyl-tRNA(Gln) + L-glutamate + ADP + phosphate + H(+). Allows the formation of correctly charged Gln-tRNA(Gln) through the transamidation of misacylated Glu-tRNA(Gln) in organisms which lack glutaminyl-tRNA synthetase. The reaction takes place in the presence of glutamine and ATP through an activated gamma-phospho-Glu-tRNA(Gln). The GatDE system is specific for glutamate and does not act on aspartate. This is Glutamyl-tRNA(Gln) amidotransferase subunit E from Pyrobaculum neutrophilum (strain DSM 2338 / JCM 9278 / NBRC 100436 / V24Sta) (Thermoproteus neutrophilus).